The primary structure comprises 265 residues: Phosphatidylserine decarboxylase proenzyme (265 aa).

Catalysis depends on charge relay system; for autoendoproteolytic cleavage activity residues D86, H142, and S226. Catalysis depends on S226, which acts as the Schiff-base intermediate with substrate; via pyruvic acid; for decarboxylase activity. S226 is modified (pyruvic acid (Ser); by autocatalysis).

This sequence belongs to the phosphatidylserine decarboxylase family. PSD-B subfamily. Prokaryotic type I sub-subfamily. In terms of assembly, heterodimer of a large membrane-associated beta subunit and a small pyruvoyl-containing alpha subunit. The cofactor is pyruvate. In terms of processing, is synthesized initially as an inactive proenzyme. Formation of the active enzyme involves a self-maturation process in which the active site pyruvoyl group is generated from an internal serine residue via an autocatalytic post-translational modification. Two non-identical subunits are generated from the proenzyme in this reaction, and the pyruvate is formed at the N-terminus of the alpha chain, which is derived from the carboxyl end of the proenzyme. The autoendoproteolytic cleavage occurs by a canonical serine protease mechanism, in which the side chain hydroxyl group of the serine supplies its oxygen atom to form the C-terminus of the beta chain, while the remainder of the serine residue undergoes an oxidative deamination to produce ammonia and the pyruvoyl prosthetic group on the alpha chain. During this reaction, the Ser that is part of the protease active site of the proenzyme becomes the pyruvoyl prosthetic group, which constitutes an essential element of the active site of the mature decarboxylase.

It is found in the cell membrane. It catalyses the reaction a 1,2-diacyl-sn-glycero-3-phospho-L-serine + H(+) = a 1,2-diacyl-sn-glycero-3-phosphoethanolamine + CO2. The protein operates within phospholipid metabolism; phosphatidylethanolamine biosynthesis; phosphatidylethanolamine from CDP-diacylglycerol: step 2/2. Functionally, catalyzes the formation of phosphatidylethanolamine (PtdEtn) from phosphatidylserine (PtdSer). The polypeptide is Phosphatidylserine decarboxylase proenzyme (Anoxybacillus flavithermus (strain DSM 21510 / WK1)).